Here is a 1052-residue protein sequence, read N- to C-terminus: F-box/WD repeat-containing protein 10 (1052 aa).

Residues 169–206 (GLNQDITDVCFSPEKDHSSKSATSQVYWTAKTQHTSLP) form a WD 1 repeat. Residues 276–323 (DFIRYLPIHLSKYILRMLDRHTLNKCASVSQHWAAMAQQVKMDLSAHG) enclose the F-box domain. WD repeat units lie at residues 409–447 (SDTW…AIPV), 451–490 (GHAG…CTRI), 493–532 (GHQG…KTFR), 534–569 (KDPI…LVKT), 572–609 (GHEG…ERCL), and 611–652 (AFKH…KVLK). Residues 690-719 (YAVEKTKQKKNKEKEEEKEENSLMEILSKC) adopt a coiled-coil conformation. The segment at 766 to 805 (LQSQGKSKSPRRDADDVEKAQKQGQLETPGKLPSHPKKKS) is disordered. Residues 775–786 (PRRDADDVEKAQ) show a composition bias toward basic and acidic residues. Residues 986 to 1010 (VLLTVKEEKEHQEAKMKEYQAREST) adopt a coiled-coil conformation.

Its function is as follows. Probable substrate-recognition component of a SCF (SKP1-CUL1-F-box protein)-type E3 ubiquitin ligase complex which mediates the ubiquitination and subsequent proteasomal degradation of target proteins. Overexpression is leading to degradation of CBX5 and CBX1. The polypeptide is F-box/WD repeat-containing protein 10 (FBXW10) (Homo sapiens (Human)).